The sequence spans 370 residues: Serine/threonine-protein kinase RIM11/MSD1 (370 aa).

The Protein kinase domain occupies 39 to 322 (FPTTEVVGHG…ALQCLCSPYF (284 aa)). Residues 45–53 (VGHGSFGVV) and Lys-68 contribute to the ATP site. Asp-164 serves as the catalytic Proton acceptor. A Phosphotyrosine modification is found at Tyr-199.

It belongs to the protein kinase superfamily. CMGC Ser/Thr protein kinase family. GSK-3 subfamily. Interacts with TDA1.

The enzyme catalyses L-seryl-[protein] + ATP = O-phospho-L-seryl-[protein] + ADP + H(+). The catalysed reaction is L-threonyl-[protein] + ATP = O-phospho-L-threonyl-[protein] + ADP + H(+). In terms of biological role, serine/threonine protein kinase that is thought to function in regulating kinetochore activity and entry into meiosis. Could phosphorylate IME1. The chain is Serine/threonine-protein kinase RIM11/MSD1 (RIM11) from Saccharomyces cerevisiae (strain ATCC 204508 / S288c) (Baker's yeast).